Consider the following 415-residue polypeptide: Beta-1,4-glucuronyltransferase 1 (415 aa).

The Cytoplasmic portion of the chain corresponds to 1–8; that stretch reads MQMSYAIR. The chain crosses the membrane as a helical; Signal-anchor for type II membrane protein span at residues 9 to 36; it reads CAFYQLLLAALMLVAMLQLLYLSLLSGL. At 37–415 the chain is on the lumenal side; the sequence is HGQEEQEQYF…ARYPNSPHRC (379 aa). Residue Asn-204 is glycosylated (N-linked (GlcNAc...) asparagine). Mn(2+)-binding residues include Asp-227 and Asp-229. Residue Asn-300 is glycosylated (N-linked (GlcNAc...) asparagine).

This sequence belongs to the glycosyltransferase 49 family. As to quaternary structure, interacts with LARGE1 and LARGE2. Requires Mn(2+) as cofactor.

It is found in the golgi apparatus membrane. The catalysed reaction is 3-O-[beta-D-Xyl-(1-&gt;4)-Rib-ol-P-Rib-ol-P-3-beta-D-GalNAc-(1-&gt;3)-beta-D-GlcNAc-(1-&gt;4)-(O-6-P-alpha-D-Man)]-Thr-[protein] + UDP-alpha-D-glucuronate = 3-O-[beta-D-GlcA-(1-&gt;3)-beta-D-Xyl-(1-&gt;4)-Rib-ol-P-Rib-ol-P-3-beta-D-GalNAc-(1-&gt;3)-beta-D-GlcNAc-(1-&gt;4)-(O-6-P-alpha-D-Man)]-Thr-[protein] + UDP + H(+). It functions in the pathway protein modification; protein glycosylation. Beta-1,4-glucuronyltransferase involved in O-mannosylation of alpha-dystroglycan (DAG1). Transfers a glucuronic acid (GlcA) residue onto a xylose (Xyl) acceptor to produce the glucuronyl-beta-1,4-xylose-beta disaccharide primer, which is further elongated by LARGE1, during synthesis of phosphorylated O-mannosyl glycan. Phosphorylated O-mannosyl glycan is a carbohydrate structure present in alpha-dystroglycan (DAG1), which is required for binding laminin G-like domain-containing extracellular proteins with high affinity. Required for axon guidance; via its function in O-mannosylation of alpha-dystroglycan (DAG1). The chain is Beta-1,4-glucuronyltransferase 1 from Mus musculus (Mouse).